A 225-amino-acid chain; its full sequence is Biosynthetic peptidoglycan transglycosylase (225 aa).

The chain crosses the membrane as a helical span at residues 9–29 (LLIFIGAILLIQLWIFSSLVW).

This sequence belongs to the glycosyltransferase 51 family.

Its subcellular location is the cell inner membrane. It catalyses the reaction [GlcNAc-(1-&gt;4)-Mur2Ac(oyl-L-Ala-gamma-D-Glu-L-Lys-D-Ala-D-Ala)](n)-di-trans,octa-cis-undecaprenyl diphosphate + beta-D-GlcNAc-(1-&gt;4)-Mur2Ac(oyl-L-Ala-gamma-D-Glu-L-Lys-D-Ala-D-Ala)-di-trans,octa-cis-undecaprenyl diphosphate = [GlcNAc-(1-&gt;4)-Mur2Ac(oyl-L-Ala-gamma-D-Glu-L-Lys-D-Ala-D-Ala)](n+1)-di-trans,octa-cis-undecaprenyl diphosphate + di-trans,octa-cis-undecaprenyl diphosphate + H(+). The protein operates within cell wall biogenesis; peptidoglycan biosynthesis. Functionally, peptidoglycan polymerase that catalyzes glycan chain elongation from lipid-linked precursors. The chain is Biosynthetic peptidoglycan transglycosylase from Acinetobacter baumannii (strain SDF).